A 318-amino-acid chain; its full sequence is Transcriptional regulator NovG (318 aa).

Residues 146–156 (VASLRSSSTAG) show a composition bias toward polar residues. The segment at 146-176 (VASLRSSSTAGTVGRRTGQDGRSRPNDGTDG) is disordered. Residues 162-176 (TGQDGRSRPNDGTDG) are compositionally biased toward basic and acidic residues.

The protein belongs to the ParB family.

In terms of biological role, transcription regulator that specifically activates expression of genes involved in the novobiocin biosynthesis pathway. Binds 5'-GTTCRACTG(N)(11)CRGTYGAAC-3' DNA sequence. The protein is Transcriptional regulator NovG (novG) of Streptomyces niveus (Streptomyces spheroides).